Reading from the N-terminus, the 787-residue chain is Serine/threonine-protein kinase PLK4 (787 aa).

Positions 14–268 constitute a Protein kinase domain; that stretch reads YEVQHLLGKG…LEQVLRHPFM (255 aa). Residues 20 to 28 and K43 each bind ATP; that span reads LGKGGFASV. The Proton acceptor role is filled by D139. The interval 311–336 is disordered; sequence SNESRSSQRLRSIEKSAQSSSNPQML. The Cryptic POLO box 1 (CPB1) domain maps to 386–505; that stretch reads EQQMRVPPLN…ARFVGLVKSK (120 aa). The region spanning 506–613 is the Cryptic POLO box 2 (CPB2) domain; it reads TPKITYFSSL…GRRPLTDVSH (108 aa). Positions 675–755 constitute a POLO box domain; that stretch reads PIKRINIPDV…IPQVKLRLKC (81 aa).

This sequence belongs to the protein kinase superfamily. Ser/Thr protein kinase family. CDC5/Polo subfamily. In terms of assembly, homodimer. In terms of processing, ubiquitinated by the SCF(Slimb) ubiquitin ligase complex; leading to its degradation by the proteasome during interphase and regulating centriole number and ensuring the block to centriole reduplication.

Its subcellular location is the cytoplasm. It is found in the cytoskeleton. The protein resides in the microtubule organizing center. The protein localises to the centrosome. It localises to the centriole. It catalyses the reaction L-seryl-[protein] + ATP = O-phospho-L-seryl-[protein] + ADP + H(+). The catalysed reaction is L-threonyl-[protein] + ATP = O-phospho-L-threonyl-[protein] + ADP + H(+). Its function is as follows. Serine/threonine-protein kinase that plays a central role in centriole duplication. Able to trigger procentriole formation on the surface of the mother centriole cylinder, using mother centriole as a platform, leading to the recruitment of centriole biogenesis proteins such as sas-6. When overexpressed, it is able to induce centrosome amplification through the simultaneous generation of multiple procentrioles adjoining each parental centriole during S phase. Centrosome amplification following overexpression can initiate tumorigenesis, highlighting the importance of centrosome regulation in cancers. The polypeptide is Serine/threonine-protein kinase PLK4 (SAK) (Drosophila willistoni (Fruit fly)).